The following is a 195-amino-acid chain: ATP-dependent Clp protease proteolytic subunit (195 aa).

The active-site Nucleophile is S98. The active site involves H123.

It belongs to the peptidase S14 family. Fourteen ClpP subunits assemble into 2 heptameric rings which stack back to back to give a disk-like structure with a central cavity, resembling the structure of eukaryotic proteasomes.

The protein localises to the cytoplasm. It catalyses the reaction Hydrolysis of proteins to small peptides in the presence of ATP and magnesium. alpha-casein is the usual test substrate. In the absence of ATP, only oligopeptides shorter than five residues are hydrolyzed (such as succinyl-Leu-Tyr-|-NHMec, and Leu-Tyr-Leu-|-Tyr-Trp, in which cleavage of the -Tyr-|-Leu- and -Tyr-|-Trp bonds also occurs).. In terms of biological role, cleaves peptides in various proteins in a process that requires ATP hydrolysis. Has a chymotrypsin-like activity. Plays a major role in the degradation of misfolded proteins. The sequence is that of ATP-dependent Clp protease proteolytic subunit from Helicobacter pylori (strain J99 / ATCC 700824) (Campylobacter pylori J99).